The primary structure comprises 89 residues: Large ribosomal subunit protein bL27 (89 aa).

Residues 1–23 (MAHKKAGGSSRNGRDSESKRLGV) are disordered.

The protein belongs to the bacterial ribosomal protein bL27 family.

This Rhizobium meliloti (strain 1021) (Ensifer meliloti) protein is Large ribosomal subunit protein bL27.